A 272-amino-acid polypeptide reads, in one-letter code: Imidazole glycerol phosphate synthase subunit HisF (272 aa).

Active-site residues include Asp-11 and Asp-130.

Belongs to the HisA/HisF family. As to quaternary structure, heterodimer of HisH and HisF.

The protein resides in the cytoplasm. It carries out the reaction 5-[(5-phospho-1-deoxy-D-ribulos-1-ylimino)methylamino]-1-(5-phospho-beta-D-ribosyl)imidazole-4-carboxamide + L-glutamine = D-erythro-1-(imidazol-4-yl)glycerol 3-phosphate + 5-amino-1-(5-phospho-beta-D-ribosyl)imidazole-4-carboxamide + L-glutamate + H(+). It participates in amino-acid biosynthesis; L-histidine biosynthesis; L-histidine from 5-phospho-alpha-D-ribose 1-diphosphate: step 5/9. In terms of biological role, IGPS catalyzes the conversion of PRFAR and glutamine to IGP, AICAR and glutamate. The HisF subunit catalyzes the cyclization activity that produces IGP and AICAR from PRFAR using the ammonia provided by the HisH subunit. This is Imidazole glycerol phosphate synthase subunit HisF from Methanococcus maripaludis (strain C5 / ATCC BAA-1333).